A 438-amino-acid polypeptide reads, in one-letter code: Protein c-ets-1-A (438 aa).

In terms of domain architecture, PNT spans 49–134 (ATFSRFTKEQ…EHLEILQKDS (86 aa)). Positions 128–240 (EILQKDSKQY…DNMCLGRISR (113 aa)) are activation domain; required for transcription activation. The interval 301–309 (FKDYVRDRA) is helix HI-1. The helix HI-2 stretch occupies residues 320-327 (AAALAGYT). Positions 332–412 (IQLWQFLLEL…AGKRYVYRFV (81 aa)) form a DNA-binding region, ETS. Positions 415–419 (LQSLL) are helix H4. The interval 423 to 429 (PEELHAM) is helix H5.

The protein belongs to the ETS family. In terms of assembly, binds DNA as a homodimer; homodimerization is required for transcription activation.

It is found in the nucleus. Its subcellular location is the cytoplasm. Its activity is regulated as follows. Autoinhibited by a module composed of four alpha helices (HI-1, HI-2, H4, and H5) that flank the DNA-binding ETS domain, reducing the affinity for DNA. Functionally, transcription factor. Directly controls the expression of cytokine and chemokine genes in a wide variety of different cellular contexts. The polypeptide is Protein c-ets-1-A (ets1-a) (Xenopus laevis (African clawed frog)).